Here is a 421-residue protein sequence, read N- to C-terminus: Putative zinc finger protein R05D3.3 (421 aa).

2 consecutive C2H2-type zinc fingers follow at residues 207–228 (VLCVICNEWICSRNRKNHIEAH) and 234–257 (YKCSACSYARRREIFVDQHIRTQH). Residues 400–421 (GSSITDSNEPGPSEIKKELAEV) are disordered.

It is found in the nucleus. The chain is Putative zinc finger protein R05D3.3 from Caenorhabditis elegans.